The following is a 463-amino-acid chain: ATP synthase subunit beta (463 aa).

Position 151–158 (151–158 (GGAGVGKT)) interacts with ATP.

It belongs to the ATPase alpha/beta chains family. In terms of assembly, F-type ATPases have 2 components, CF(1) - the catalytic core - and CF(0) - the membrane proton channel. CF(1) has five subunits: alpha(3), beta(3), gamma(1), delta(1), epsilon(1). CF(0) has three main subunits: a(1), b(2) and c(9-12). The alpha and beta chains form an alternating ring which encloses part of the gamma chain. CF(1) is attached to CF(0) by a central stalk formed by the gamma and epsilon chains, while a peripheral stalk is formed by the delta and b chains.

It localises to the cell membrane. It carries out the reaction ATP + H2O + 4 H(+)(in) = ADP + phosphate + 5 H(+)(out). In terms of biological role, produces ATP from ADP in the presence of a proton gradient across the membrane. The catalytic sites are hosted primarily by the beta subunits. In Clostridium botulinum (strain Loch Maree / Type A3), this protein is ATP synthase subunit beta.